Here is a 344-residue protein sequence, read N- to C-terminus: Serpentine receptor class H-72 (344 aa).

7 helical membrane passes run 30-50 (GLAFCCQIIGFISLPMHFFTG), 66-86 (LSLVNLNIWYIISQVIVSFFI), 110-132 (TVVQICILYTINDAVHVSITLLF), 155-175 (WLAGNFFGTVFITSPVFFNLA), 221-241 (SIYMLQIIFFTSCCIYYLVIV), 259-279 (YGLIIQTLIPAAFTLIPSVLI), and 292-312 (LVSISYAVHIVVGSLAILLVH).

Belongs to the nematode receptor-like protein srh family.

Its subcellular location is the membrane. This is Serpentine receptor class H-72 (srh-72) from Caenorhabditis elegans.